The chain runs to 202 residues: Ribonuclease HII (202 aa).

Positions 18-202 (TYICGVDEAG…FAPVAKLLKQ (185 aa)) constitute an RNase H type-2 domain. A divalent metal cation-binding residues include Asp24, Glu25, and Asp116.

It belongs to the RNase HII family. Requires Mn(2+) as cofactor. Mg(2+) serves as cofactor.

The protein localises to the cytoplasm. The catalysed reaction is Endonucleolytic cleavage to 5'-phosphomonoester.. Endonuclease that specifically degrades the RNA of RNA-DNA hybrids. The protein is Ribonuclease HII of Acholeplasma laidlawii (strain PG-8A).